The primary structure comprises 322 residues: Undecaprenyl-phosphate 4-deoxy-4-formamido-L-arabinose transferase (322 aa).

Over 1–235 (MFEIHPVKKV…TCLTTTPLRM (235 aa)) the chain is Cytoplasmic. A helical transmembrane segment spans residues 236 to 256 (LSLLGSIIAIGGFSIAVLLVI). At 257 to 269 (LRLTFGPQWAAEG) the chain is on the periplasmic side. Residues 270–290 (VFMLFAVLFTFIGAQFIGMGL) form a helical membrane-spanning segment. At 291–322 (LGEYIGRIYTDVRARPRYFVQQVIRPSSKENE) the chain is on the cytoplasmic side.

Belongs to the glycosyltransferase 2 family.

The protein resides in the cell inner membrane. It catalyses the reaction UDP-4-deoxy-4-formamido-beta-L-arabinose + di-trans,octa-cis-undecaprenyl phosphate = 4-deoxy-4-formamido-alpha-L-arabinopyranosyl di-trans,octa-cis-undecaprenyl phosphate + UDP. It participates in glycolipid biosynthesis; 4-amino-4-deoxy-alpha-L-arabinose undecaprenyl phosphate biosynthesis; 4-amino-4-deoxy-alpha-L-arabinose undecaprenyl phosphate from UDP-4-deoxy-4-formamido-beta-L-arabinose and undecaprenyl phosphate: step 1/2. The protein operates within bacterial outer membrane biogenesis; lipopolysaccharide biosynthesis. Its function is as follows. Catalyzes the transfer of 4-deoxy-4-formamido-L-arabinose from UDP to undecaprenyl phosphate. The modified arabinose is attached to lipid A and is required for resistance to polymyxin and cationic antimicrobial peptides. This is Undecaprenyl-phosphate 4-deoxy-4-formamido-L-arabinose transferase from Escherichia coli O45:K1 (strain S88 / ExPEC).